A 215-amino-acid chain; its full sequence is Small ribosomal subunit protein uS3 (215 aa).

Residues 39 to 107 (VRQYLQKKLA…PVHINIEEIR (69 aa)) enclose the KH type-2 domain.

This sequence belongs to the universal ribosomal protein uS3 family. Part of the 30S ribosomal subunit. Forms a tight complex with proteins S10 and S14.

Functionally, binds the lower part of the 30S subunit head. Binds mRNA in the 70S ribosome, positioning it for translation. The sequence is that of Small ribosomal subunit protein uS3 from Nitrosomonas europaea (strain ATCC 19718 / CIP 103999 / KCTC 2705 / NBRC 14298).